Here is a 922-residue protein sequence, read N- to C-terminus: Autophagy-related protein 9B (922 aa).

Disordered stretches follow at residues 1–22 (MVRRTGWGGSRRQRGRWGDLGP) and 85–144 (TPHN…MGPL). Residues 1 to 206 (MVRRTGWGGS…KIYSYHQRNG (206 aa)) are Cytoplasmic-facing. Residues 85 to 114 (TPHNVLPTPTTPSTQAHPTMIHTSASPSWG) are compositionally biased toward polar residues. Residues 115–124 (SHSTPPLASA) show a composition bias toward low complexity. The short motif at 150-153 (YERL) is the Tyrosine-based sorting signal element. Residues 207 to 227 (FACILLEDVFQLGQFIFIVTF) traverse the membrane as a helical segment. Topologically, residues 228-275 (TTFLLRCVDYNVLFNNQPKNHTRRGPLHSKVTLSDAILPSAQCAEKIH) are lumenal. Residues 276-296 (DSPLLVFLLVLAAGFWLFQLL) traverse the membrane as a helical segment. Over 297 to 437 (RSVCNLFSYW…GVLANRWRRT (141 aa)) the chain is Cytoplasmic. The stretch at 438–458 (VLLLAAVNLALSPLVLAWQVL) is an intramembrane region. Residues 459 to 523 (HAFYSHVELL…RAAEPPAPLR (65 aa)) lie on the Cytoplasmic side of the membrane. A helical membrane pass occupies residues 524–544 (ALLARQLVFFSGALFAALLVL). The Lumenal segment spans residues 545–550 (TIYDED). The helical transmembrane segment at 551–571 (VLAVEHVLTTMTALGVTATVA) threads the bilayer. The Cytoplasmic segment spans residues 572–624 (RSFIPEEQCQGRSSQLLLQAALAHMHYLPEEPGATGARASSYWQMAQLLQYRA). An intramembrane segment occupies 625 to 645 (VSLLEELLSPLLTPLFLLFWF). The Cytoplasmic portion of the chain corresponds to 646-922 (RPRALEIIDF…QKEPLTGPLH (277 aa)). The tract at residues 848–922 (ELWGEASASS…QKEPLTGPLH (75 aa)) is disordered. Low complexity-rich tracts occupy residues 854-870 (SASSPSRPWSSPSQPGS) and 877-889 (SWSSDGSSPASSP). Polar residues predominate over residues 890–899 (RQQWGTQRAQ).

This sequence belongs to the ATG9 family. Homotrimer; forms a homotrimer with a central pore that forms a path between the two membrane leaflets. In terms of tissue distribution, expressed in heart, brain, and placenta and testis.

It localises to the preautophagosomal structure membrane. It carries out the reaction a 1,2-diacyl-sn-glycero-3-phosphocholine(in) = a 1,2-diacyl-sn-glycero-3-phosphocholine(out). It catalyses the reaction a 1,2-diacyl-sn-glycero-3-phospho-L-serine(in) = a 1,2-diacyl-sn-glycero-3-phospho-L-serine(out). The enzyme catalyses a 1,2-diacyl-sn-glycero-3-phosphoethanolamine(in) = a 1,2-diacyl-sn-glycero-3-phosphoethanolamine(out). In terms of biological role, phospholipid scramblase involved in autophagy by mediating autophagosomal membrane expansion. Cycles between the preautophagosomal structure/phagophore assembly site (PAS) and the cytoplasmic vesicle pool and supplies membrane for the growing autophagosome. Lipid scramblase activity plays a key role in preautophagosomal structure/phagophore assembly by distributing the phospholipids that arrive through ATG2 (ATG2A or ATG2B) from the cytoplasmic to the luminal leaflet of the bilayer, thereby driving autophagosomal membrane expansion. In addition to autophagy, also plays a role in necrotic cell death. This chain is Autophagy-related protein 9B, found in Mus musculus (Mouse).